The primary structure comprises 195 residues: Imidazoleglycerol-phosphate dehydratase (195 aa).

This sequence belongs to the imidazoleglycerol-phosphate dehydratase family.

The protein resides in the cytoplasm. It carries out the reaction D-erythro-1-(imidazol-4-yl)glycerol 3-phosphate = 3-(imidazol-4-yl)-2-oxopropyl phosphate + H2O. Its pathway is amino-acid biosynthesis; L-histidine biosynthesis; L-histidine from 5-phospho-alpha-D-ribose 1-diphosphate: step 6/9. The polypeptide is Imidazoleglycerol-phosphate dehydratase (Haloarcula marismortui (strain ATCC 43049 / DSM 3752 / JCM 8966 / VKM B-1809) (Halobacterium marismortui)).